The primary structure comprises 102 residues: NAD(P)H-quinone oxidoreductase subunit 4L (102 aa).

The next 3 membrane-spanning stretches (helical) occupy residues 4 to 24 (LQFFLVVAAILFCIGIYGLIV), 33 to 53 (MSIELMLNAVNLNFMAFSNFV), and 65 to 85 (VFVITVAAAEAAVGLAIVLGI).

It belongs to the complex I subunit 4L family. As to quaternary structure, NDH-1 can be composed of about 15 different subunits; different subcomplexes with different compositions have been identified which probably have different functions.

The protein resides in the cellular thylakoid membrane. The catalysed reaction is a plastoquinone + NADH + (n+1) H(+)(in) = a plastoquinol + NAD(+) + n H(+)(out). It catalyses the reaction a plastoquinone + NADPH + (n+1) H(+)(in) = a plastoquinol + NADP(+) + n H(+)(out). Its function is as follows. NDH-1 shuttles electrons from an unknown electron donor, via FMN and iron-sulfur (Fe-S) centers, to quinones in the respiratory and/or the photosynthetic chain. The immediate electron acceptor for the enzyme in this species is believed to be plastoquinone. Couples the redox reaction to proton translocation, and thus conserves the redox energy in a proton gradient. Cyanobacterial NDH-1 also plays a role in inorganic carbon-concentration. The chain is NAD(P)H-quinone oxidoreductase subunit 4L from Synechococcus sp. (strain JA-3-3Ab) (Cyanobacteria bacterium Yellowstone A-Prime).